The chain runs to 207 residues: MSQGILFIISAPSGTGKSSLIEGLLKTKFLYNIQVSISHTTRVMRPGESHGKHYYFISKKEFRIMIKQESFLEYAKVFNNYYGTSRQSIEKMLLSGIDVFLDIDWQGANQIRYKMPNSKSIFLLPPSKDELYKRLRERGQDSDTVISKRMEKAVDEMNHYSEYDYLIINDDFQKAINDLRTIIIAEHLCLFHQKNKHNVLISQLLKS.

One can recognise a Guanylate kinase-like domain in the interval 4–184; the sequence is GILFIISAPS…AINDLRTIII (181 aa). Residue 11 to 18 participates in ATP binding; sequence APSGTGKS.

It belongs to the guanylate kinase family.

It is found in the cytoplasm. It carries out the reaction GMP + ATP = GDP + ADP. Essential for recycling GMP and indirectly, cGMP. The protein is Guanylate kinase of Buchnera aphidicola subsp. Schizaphis graminum (strain Sg).